The primary structure comprises 95 residues: Small ribosomal subunit protein bS20c (95 aa).

Positions 76 to 95 are disordered; the sequence is NGSAKKAKLTKRLKEKKISL. The segment covering 80-95 has biased composition (basic residues); that stretch reads KKAKLTKRLKEKKISL.

Belongs to the bacterial ribosomal protein bS20 family.

It localises to the plastid. The protein localises to the chloroplast. In terms of biological role, binds directly to 16S ribosomal RNA. This Guillardia theta (Cryptophyte) protein is Small ribosomal subunit protein bS20c.